A 607-amino-acid polypeptide reads, in one-letter code: DNA mismatch repair protein MutL (607 aa).

Belongs to the DNA mismatch repair MutL/HexB family.

This protein is involved in the repair of mismatches in DNA. It is required for dam-dependent methyl-directed DNA mismatch repair. May act as a 'molecular matchmaker', a protein that promotes the formation of a stable complex between two or more DNA-binding proteins in an ATP-dependent manner without itself being part of a final effector complex. The protein is DNA mismatch repair protein MutL of Anaeromyxobacter dehalogenans (strain 2CP-1 / ATCC BAA-258).